A 636-amino-acid polypeptide reads, in one-letter code: Ketocytochalasin monooxygenase (636 aa).

FAD is bound by residues Asp-125, 133 to 136 (TWYW), Asp-145, Tyr-151, and Ile-195. Residue 143–145 (ACD) participates in NADP(+) binding. Residues 279–285 (TGASAVQ), 302–303 (RT), and 420–421 (KR) each bind NADP(+). Trp-534 is an FAD binding site.

It belongs to the FAD-binding monooxygenase family. The cofactor is FAD.

The enzyme catalyses ketocytochalasin + NADPH + O2 + H(+) = iso-precytochalasin + NADP(+) + H2O. The catalysed reaction is iso-precytochalasin + NADPH + O2 + H(+) = cytochalasin Z16 + NADP(+) + H2O. It participates in mycotoxin biosynthesis. In terms of biological role, ketocytochalasin monooxygenase; part of the gene cluster that mediates the biosynthesis of a family of the mycotoxins cytochalasins E and K. The hybrid PKS-NRPS synthetase ccsA and the enoyl reductase ccsC are responsible for fusion of phenylalanine with an octaketide backbone and subsequent release of the stable tetramic acid precursor. The polyketide synthase module (PKS) of the PKS-NRPS ccsA is responsible for the synthesis of the octaketide backbone. The downstream nonribosomal peptide synthetase (NRPS) amidates the carboxyl end of the octaketide with a phenylalanine. A reductase-like domain (R) at the C-terminus catalyzes the reductive release of the polyketide-amino acid intermediate. Because ccsA lacks a designated enoylreductase (ER) domain, the required activity is provided the enoyl reductase ccsC. Upon formation of the 11-membered carbocycle-fused perhydroisoindolone intermediate, a number of oxidative steps are required to afford the final cytochalasin E and K, including two hydroxylations at C17 and C18, one alcohol oxidation at C17, one epoxidation at C6 and C7 and two Baeyer-Villiger oxidations. The oxidative modification at C17, C18 and the C6-C7 epoxidation are likely to be catalyzed by the two cytochrome P450 oxygenases ccsD and ccsG. CcsD may be responsible for the epoxidation of the C6-C7 double bond. CcsG may be responsible for the successive oxidative modifications at C17 and C18. The double Baeyer-Villiger oxidations of ketocytochalasin to precytochalasin and cytochalasin Z(16) are among the final steps leading to cytochalasin E and K and are catalyzed by ccsB. The first oxygen insertion step follows that of the classic BVMO mechanism, generating the ester precytochalasin. Release of precytochalasin into an aqueous environment can generate the shunt product iso-precytochalasin through spontaneous isomerization. Alternatively, precytochalasin can undergo further oxidation by ccsB to yield the in-line carbonate-containing cytochalasin Z(16). Cytochalasin Z(16) is a precursor to cytochalasin E and cytochalasin K, whereas iso-precytochalasin is a precursor to cytochalasin Z(17) and rosellichalasin. The hydrolyase ccsE may catalyze hydrolysis of epoxide bond in cytochalasin E to afford cytochalasin K. The function of ccsF has not been assigned but it may play a role in post-PKS-NRPS biosynthetic step, resistance or transport of cytochalasins and related PKS-NRPS products. This chain is Ketocytochalasin monooxygenase, found in Aspergillus clavatus (strain ATCC 1007 / CBS 513.65 / DSM 816 / NCTC 3887 / NRRL 1 / QM 1276 / 107).